We begin with the raw amino-acid sequence, 491 residues long: Argininosuccinate lyase (491 aa).

The protein belongs to the lyase 1 family. Argininosuccinate lyase subfamily.

It localises to the cytoplasm. It catalyses the reaction 2-(N(omega)-L-arginino)succinate = fumarate + L-arginine. It participates in amino-acid biosynthesis; L-arginine biosynthesis; L-arginine from L-ornithine and carbamoyl phosphate: step 3/3. In Methanosarcina acetivorans (strain ATCC 35395 / DSM 2834 / JCM 12185 / C2A), this protein is Argininosuccinate lyase.